Reading from the N-terminus, the 92-residue chain is Small ribosomal subunit protein uS19c (92 aa).

The protein belongs to the universal ribosomal protein uS19 family.

It is found in the plastid. The protein localises to the chloroplast. Protein S19 forms a complex with S13 that binds strongly to the 16S ribosomal RNA. In Gossypium barbadense (Sea Island cotton), this protein is Small ribosomal subunit protein uS19c.